Here is a 156-residue protein sequence, read N- to C-terminus: Small ribosomal subunit protein uS7 (156 aa).

This sequence belongs to the universal ribosomal protein uS7 family. As to quaternary structure, part of the 30S ribosomal subunit. Contacts proteins S9 and S11.

Its function is as follows. One of the primary rRNA binding proteins, it binds directly to 16S rRNA where it nucleates assembly of the head domain of the 30S subunit. Is located at the subunit interface close to the decoding center, probably blocks exit of the E-site tRNA. This is Small ribosomal subunit protein uS7 from Enterobacter sp. (strain 638).